We begin with the raw amino-acid sequence, 556 residues long: Delta-1-pyrroline-5-carboxylate dehydrogenase 12A1, mitochondrial (556 aa).

282–287 is an NAD(+) binding site; that stretch reads GSSRVA. Glutamate 301 acts as the Proton acceptor in catalysis. Cysteine 336 acts as the Nucleophile in catalysis.

It belongs to the aldehyde dehydrogenase family. In terms of tissue distribution, highly expressed in flowers. Constitutively expressed at low levels in the other tissues. Highly expressed in pollen grains and tissues undergoing cell death. Expressed in old leaves, mature siliques and developing embryos.

The protein localises to the mitochondrion matrix. The enzyme catalyses (S)-1-pyrroline-5-carboxylate + NAD(+) + 2 H2O = L-glutamate + NADH + H(+). The protein operates within amino-acid degradation; L-proline degradation into L-glutamate; L-glutamate from L-proline: step 2/2. In terms of biological role, plays a role in the inhibition of programmed cell death by converting the toxic proline catabolism intermediate (s)-1-pyrroline-5-carboxylate (P5C) to glutamate. The sequence is that of Delta-1-pyrroline-5-carboxylate dehydrogenase 12A1, mitochondrial from Arabidopsis thaliana (Mouse-ear cress).